The chain runs to 211 residues: Protein GrpE (211 aa).

Residues 1–13 (MVDKDEEQIKQNV) are compositionally biased toward basic and acidic residues. A disordered region spans residues 1–38 (MVDKDEEQIKQNVEEDLSSTVEQTGEENIEFPSAPNHP).

This sequence belongs to the GrpE family. In terms of assembly, homodimer.

Its subcellular location is the cytoplasm. Functionally, participates actively in the response to hyperosmotic and heat shock by preventing the aggregation of stress-denatured proteins, in association with DnaK and GrpE. It is the nucleotide exchange factor for DnaK and may function as a thermosensor. Unfolded proteins bind initially to DnaJ; upon interaction with the DnaJ-bound protein, DnaK hydrolyzes its bound ATP, resulting in the formation of a stable complex. GrpE releases ADP from DnaK; ATP binding to DnaK triggers the release of the substrate protein, thus completing the reaction cycle. Several rounds of ATP-dependent interactions between DnaJ, DnaK and GrpE are required for fully efficient folding. The sequence is that of Protein GrpE from Protochlamydia amoebophila (strain UWE25).